Reading from the N-terminus, the 214-residue chain is Phosphatidylserine decarboxylase proenzyme (214 aa).

Ser-182 functions as the Schiff-base intermediate with substrate; via pyruvic acid in the catalytic mechanism. Residue Ser-182 is modified to Pyruvic acid (Ser); by autocatalysis.

It belongs to the phosphatidylserine decarboxylase family. PSD-A subfamily. As to quaternary structure, heterodimer of a large membrane-associated beta subunit and a small pyruvoyl-containing alpha subunit. Requires pyruvate as cofactor. Is synthesized initially as an inactive proenzyme. Formation of the active enzyme involves a self-maturation process in which the active site pyruvoyl group is generated from an internal serine residue via an autocatalytic post-translational modification. Two non-identical subunits are generated from the proenzyme in this reaction, and the pyruvate is formed at the N-terminus of the alpha chain, which is derived from the carboxyl end of the proenzyme. The post-translation cleavage follows an unusual pathway, termed non-hydrolytic serinolysis, in which the side chain hydroxyl group of the serine supplies its oxygen atom to form the C-terminus of the beta chain, while the remainder of the serine residue undergoes an oxidative deamination to produce ammonia and the pyruvoyl prosthetic group on the alpha chain.

It localises to the cell membrane. The enzyme catalyses a 1,2-diacyl-sn-glycero-3-phospho-L-serine + H(+) = a 1,2-diacyl-sn-glycero-3-phosphoethanolamine + CO2. It participates in phospholipid metabolism; phosphatidylethanolamine biosynthesis; phosphatidylethanolamine from CDP-diacylglycerol: step 2/2. In terms of biological role, catalyzes the formation of phosphatidylethanolamine (PtdEtn) from phosphatidylserine (PtdSer). The polypeptide is Phosphatidylserine decarboxylase proenzyme (Burkholderia multivorans (strain ATCC 17616 / 249)).